We begin with the raw amino-acid sequence, 509 residues long: Glutamyl-tRNA(Gln) amidotransferase subunit B, mitochondrial (509 aa).

Belongs to the GatB/GatE family. GatB subfamily. As to quaternary structure, subunit of the heterotrimeric GatFAB amidotransferase (AdT) complex, composed of A, B and F subunits.

The protein localises to the mitochondrion. The enzyme catalyses L-glutamyl-tRNA(Gln) + L-glutamine + ATP + H2O = L-glutaminyl-tRNA(Gln) + L-glutamate + ADP + phosphate + H(+). In terms of biological role, allows the formation of correctly charged Gln-tRNA(Gln) through the transamidation of misacylated Glu-tRNA(Gln) in the mitochondria. The reaction takes place in the presence of glutamine and ATP through an activated gamma-phospho-Glu-tRNA(Gln). This Candida dubliniensis (strain CD36 / ATCC MYA-646 / CBS 7987 / NCPF 3949 / NRRL Y-17841) (Yeast) protein is Glutamyl-tRNA(Gln) amidotransferase subunit B, mitochondrial.